The chain runs to 605 residues: Arginyl-tRNA--protein transferase 2 (605 aa).

The segment covering 496–513 has biased composition (low complexity); it reads KVSSSSSSPQASETLLES. A disordered region spans residues 496–549; it reads KVSSSSSSPQASETLLESTSEHEDMEQGDTNDDDDEMYNSDEDSDSDSSSSRNR. Acidic residues predominate over residues 518 to 541; it reads EDMEQGDTNDDDDEMYNSDEDSDS.

Belongs to the R-transferase family.

The catalysed reaction is an N-terminal L-alpha-aminoacyl-[protein] + L-arginyl-tRNA(Arg) = an N-terminal L-arginyl-L-aminoacyl-[protein] + tRNA(Arg) + H(+). Its function is as follows. Involved in the post-translational conjugation of arginine to the N-terminal aspartate or glutamate of a protein. This arginylation is required for degradation of the protein via the ubiquitin pathway. Component of the N-end rule pathway with ATE1 and PRT6. The N-end rule pathway regulates seed after-ripening, seedling sugar sensitivity, seedling lipid breakdown, and abscisic acid (ABA) sensitivity of germination. The end-rule pathway regulates various aspects of leaf and shoot development. Involved in the oxygen-dependent N-arginylation of RAP2-12, an activator of hypoxic gene expression. This N-terminal modification leads to ubiquitination by PRT6 and subsequent degradation of RAP2-12 under aerobic conditions. Involved in disease resistance. The end-rule pathway plays a role in regulating the timing and amplitude of the immune response following infection with the bacterial pathogen Pseudomonas syringae pv tomato. Regulates the biosynthesis of plant-defense metabolites such as glucosinolates, and the biosynthesis and response to the phytohormone jasmonate (JA), which plays a key role in plant immunity. The protein is Arginyl-tRNA--protein transferase 2 of Arabidopsis thaliana (Mouse-ear cress).